Reading from the N-terminus, the 397-residue chain is MSEYIEHSPSGTSVGRVEKRFFTVAEADSPLTVESGRALGPVVLAYETCGQLNERADNAVLVLHALTGDSHAAGYYEPGDAKPGWWDLMIGPGKPIDTDRYYVICSNVIGGCMGSTGPSSLDPATGQPYGLTFPVITIGDMVRAQKRLVEHLGVTKLLSVVGGSMGGMQALEWSVRYPDMVRTAVPLATTTKHSALAIAFNEVARQAIMADPNWNGGNYYDGVPPAHGLAVGRMIGHITYLSDEAMRQKFDRRLQDRCENSFVLEEPDFQVESYLRYQGQKFVDRFDANSFLYITKAADYFNLEASHGCGSAVAAFAKAKCRYLVASFSSDWLYPTYQSRSMVQAMKKNGLDVSFVELEAKWGHDAFLLPNARLSGMIARFLDRALVDAAKEDARAL.

The 311-residue stretch at asparagine 58–leucine 368 folds into the AB hydrolase-1 domain. Serine 164 acts as the Nucleophile in catalysis. Position 233 (arginine 233) interacts with substrate. Residues aspartate 331 and histidine 364 contribute to the active site. Substrate is bound at residue aspartate 365.

It belongs to the AB hydrolase superfamily. MetX family. As to quaternary structure, homodimer.

It is found in the cytoplasm. The enzyme catalyses L-homoserine + acetyl-CoA = O-acetyl-L-homoserine + CoA. It participates in amino-acid biosynthesis; L-methionine biosynthesis via de novo pathway; O-acetyl-L-homoserine from L-homoserine: step 1/1. In terms of biological role, transfers an acetyl group from acetyl-CoA to L-homoserine, forming acetyl-L-homoserine. This Solidesulfovibrio magneticus (strain ATCC 700980 / DSM 13731 / RS-1) (Desulfovibrio magneticus) protein is Homoserine O-acetyltransferase.